Consider the following 298-residue polypeptide: Mitochondrial distribution and morphology protein 12 (298 aa).

Residues 1 to 298 (MSIELDWTGL…VYPHFYTLYL (298 aa)) enclose the SMP-LTD domain. Residues 118-142 (SEHEESLSRWSDTESETGTCDSSSL) are disordered. Positions 133–142 (ETGTCDSSSL) are enriched in polar residues.

It belongs to the MDM12 family. In terms of assembly, component of the ER-mitochondria encounter structure (ERMES) or MDM complex, composed of MMM1, MDM10, MDM12 and MDM34. An MMM1 homodimer associates with one molecule of MDM12 on each side in a pairwise head-to-tail manner, and the SMP-LTD domains of MMM1 and MDM12 generate a continuous hydrophobic tunnel for phospholipid trafficking.

It localises to the mitochondrion outer membrane. The protein resides in the endoplasmic reticulum membrane. Component of the ERMES/MDM complex, which serves as a molecular tether to connect the endoplasmic reticulum (ER) and mitochondria. Components of this complex are involved in the control of mitochondrial shape and protein biogenesis, and function in nonvesicular lipid trafficking between the ER and mitochondria. MDM12 is required for the interaction of the ER-resident membrane protein MMM1 and the outer mitochondrial membrane-resident beta-barrel protein MDM10. The MDM12-MMM1 subcomplex functions in the major beta-barrel assembly pathway that is responsible for biogenesis of all mitochondrial outer membrane beta-barrel proteins, and acts in a late step after the SAM complex. The MDM10-MDM12-MMM1 subcomplex further acts in the TOM40-specific pathway after the action of the MDM12-MMM1 complex. Essential for establishing and maintaining the structure of mitochondria and maintenance of mtDNA nucleoids. In Malassezia globosa (strain ATCC MYA-4612 / CBS 7966) (Dandruff-associated fungus), this protein is Mitochondrial distribution and morphology protein 12.